An 87-amino-acid chain; its full sequence is Small ribosomal subunit protein bS16 (87 aa).

It belongs to the bacterial ribosomal protein bS16 family.

The protein is Small ribosomal subunit protein bS16 of Psychrobacter sp. (strain PRwf-1).